Consider the following 204-residue polypeptide: Abscisic acid receptor PYL3 (204 aa).

Residues 40 to 191 form an START-like region; it reads HEPRDHQCSS…NLKSLAEVSE (152 aa). A disulfide bridge links Cys47 with Cys172. Residues Lys76, 104-109, 131-137, and Glu156 each bind abscisate; these read ATRSTE and RLKNYSS. The Gate loop motif lies at 100–104; it reads SGLPA. Positions 130–132 match the Latch loop motif; it reads HRL.

It belongs to the PYR/PYL/RCAR abscisic acid intracellular receptor family. In terms of assembly, monomer. Interacts with PP2C50. Binding to PP2C50 is dependent on the presence of abscisic acid (ABA). Interacts with PP2C30 and PP2C53.

The protein resides in the cytoplasm. It is found in the cytosol. The protein localises to the nucleus. Involved in abscisic acid (ABA) signaling during seed germination and abiotic stress response. Acts as a positive regulator of ABA-mediated inhibition of seed germination, and tolerance to drought and cold stresses. Together with PP2C50 and SAPK10, may form an ABA signaling module involved in stress response. Inhibits the protein phosphatases PP2C06 and PP2C09 when activated by abscisic acid (ABA). The sequence is that of Abscisic acid receptor PYL3 from Oryza sativa subsp. japonica (Rice).